Here is a 329-residue protein sequence, read N- to C-terminus: GTPase Obg (329 aa).

An Obg domain is found at 1–159 (MQFIDQAIID…WSLQLELKLL (159 aa)). Residues 160-328 (AEVGIIGLPN…LLSSIWYELG (169 aa)) form the OBG-type G domain. Residues 166–173 (GLPNAGKS), 191–195 (FTTLI), 213–216 (DIPG), 280–283 (NKKE), and 309–311 (SAV) contribute to the ATP site. Mg(2+) is bound by residues S173 and T193.

This sequence belongs to the TRAFAC class OBG-HflX-like GTPase superfamily. OBG GTPase family. In terms of assembly, monomer. The cofactor is Mg(2+).

It is found in the cytoplasm. Its function is as follows. An essential GTPase which binds GTP, GDP and possibly (p)ppGpp with moderate affinity, with high nucleotide exchange rates and a fairly low GTP hydrolysis rate. Plays a role in control of the cell cycle, stress response, ribosome biogenesis and in those bacteria that undergo differentiation, in morphogenesis control. The polypeptide is GTPase Obg (Prochlorococcus marinus (strain NATL1A)).